The sequence spans 571 residues: Putative F-box protein At5g39460 (571 aa).

One can recognise an F-box domain in the interval 9–55 (ACLLLTLPEDVFAVISRFLSPSDICNLILCGKSLCALVDSEKTWLVQ).

The sequence is that of Putative F-box protein At5g39460 from Arabidopsis thaliana (Mouse-ear cress).